The following is a 343-amino-acid chain: NADP-dependent alkenal double bond reductase P2 (343 aa).

2 residues coordinate substrate: Tyr52 and Tyr79. NADP(+) contacts are provided by residues Gly164 to Gly167, Lys190, Tyr206, Asn230, Cys252 to Tyr258, Phe282 to Val284, and Asn332.

This sequence belongs to the NADP-dependent oxidoreductase L4BD family. As to quaternary structure, homodimer.

It catalyses the reaction an n-alkanal + NAD(+) = an alk-2-enal + NADH + H(+). The enzyme catalyses an n-alkanal + NADP(+) = an alk-2-enal + NADPH + H(+). Functionally, catalyzes the reduction of the 7-8 double bond of phenylpropanal substrates, such as p-coumaryl aldehyde and coniferyl aldehyde (in vitro). Has activity towards toxic substrates, such as 4-hydroxy-(2E)-nonenal (in vitro). May play a distinct role in plant antioxidant defense and is possibly involved in NAD(P)/NAD(P)h homeostasis. This is NADP-dependent alkenal double bond reductase P2 (P2) from Arabidopsis thaliana (Mouse-ear cress).